The following is an 898-amino-acid chain: Serine/threonine-protein kinase TAO3 (898 aa).

The 254-residue stretch at F24–V277 folds into the Protein kinase domain. ATP-binding positions include I30 to V38 and K53. Catalysis depends on D147, which acts as the Proton acceptor. Disordered stretches follow at residues T316–S362 and D405–Q425. Position 324 is a phosphoserine; by ATM (S324). S331, S343, S346, and S349 each carry phosphoserine. Over residues G334–P351 the composition is skewed to polar residues. Residues S352–S362 show a composition bias toward low complexity. T357 is modified (phosphothreonine). Position 359 is a phosphoserine (S359). Positions D405 to P416 are enriched in basic and acidic residues. S442 bears the Phosphoserine mark. Coiled-coil stretches lie at residues E452–N502, F548–L649, and L754–S879. The interval E565–E596 is disordered. K830 is subject to N6-acetyllysine.

Belongs to the protein kinase superfamily. STE Ser/Thr protein kinase family. STE20 subfamily. As to quaternary structure, self-associates. Interacts with ERN1 and TRAF2. Interaction with TRAF2 is facilitated under ER stress conditions, such as treatment with tunicamycin, and may promote TRAF2 phosphorylation. Interacts (via N-terminus) with STK25; the interaction promotes STK25 abundance at the level of protein expression and/or stability. In terms of processing, autophosphorylated. Phosphorylation at Ser-324 by ATM following DNA damage is required for activation of the p38/MAPK14 stress-activated MAPK cascade. Phosphorylated at Ser-324 and on Tyr residues during T cell activation. Phosphorylated by LRRK2.

Its subcellular location is the cytoplasm. It localises to the cell membrane. The protein localises to the membrane raft. It is found in the lipid droplet. It carries out the reaction L-seryl-[protein] + ATP = O-phospho-L-seryl-[protein] + ADP + H(+). The catalysed reaction is L-threonyl-[protein] + ATP = O-phospho-L-threonyl-[protein] + ADP + H(+). In terms of biological role, serine/threonine-protein kinase that acts as a regulator of the p38/MAPK14 stress-activated MAPK cascade and of the MAPK8/JNK cascade. In response to DNA damage, involved in the G2/M transition DNA damage checkpoint by activating the p38/MAPK14 stress-activated MAPK cascade, probably by mediating phosphorylation of upstream MAP2K3 and MAP2K6 kinases. Inhibits basal activity of the MAPK8/JNK cascade and diminishes its activation in response to epidermal growth factor (EGF). Positively regulates canonical T cell receptor (TCR) signaling by preventing early PTPN6/SHP1-mediated inactivation of LCK, ensuring sustained TCR signaling that is required for optimal activation and differentiation of T cells. Phosphorylates PTPN6/SHP1 on 'Thr-394', leading to its polyubiquitination and subsequent proteasomal degradation. Required for cell surface expression of metalloprotease ADAM10 on type 1 transitional B cells which is necessary for their NOTCH-mediated development into marginal zone B cells. Also required for the NOTCH-mediated terminal differentiation of splenic conventional type 2 dendritic cells. Positively regulates osteoblast differentiation by acting as an upstream activator of the JNK pathway. Promotes JNK signaling in hepatocytes and positively regulates hepatocyte lipid storage by inhibiting beta-oxidation and triacylglycerol secretion while enhancing lipid synthesis. Restricts age-associated inflammation by negatively regulating differentiation of macrophages and their production of pro-inflammatory cytokines. Plays a role in negatively regulating the abundance of regulatory T cells in white adipose tissue. In Pongo abelii (Sumatran orangutan), this protein is Serine/threonine-protein kinase TAO3 (TAOK3).